Consider the following 413-residue polypeptide: NADH-quinone oxidoreductase subunit D (413 aa).

Belongs to the complex I 49 kDa subunit family. In terms of assembly, NDH-1 is composed of 14 different subunits. Subunits NuoB, C, D, E, F, and G constitute the peripheral sector of the complex.

The protein localises to the cell inner membrane. The enzyme catalyses a quinone + NADH + 5 H(+)(in) = a quinol + NAD(+) + 4 H(+)(out). In terms of biological role, NDH-1 shuttles electrons from NADH, via FMN and iron-sulfur (Fe-S) centers, to quinones in the respiratory chain. The immediate electron acceptor for the enzyme in this species is believed to be ubiquinone. Couples the redox reaction to proton translocation (for every two electrons transferred, four hydrogen ions are translocated across the cytoplasmic membrane), and thus conserves the redox energy in a proton gradient. The sequence is that of NADH-quinone oxidoreductase subunit D from Rhodobacter capsulatus (Rhodopseudomonas capsulata).